The primary structure comprises 626 residues: Threonine--tRNA ligase (626 aa).

The segment at 1–144 (MRMLLIHADY…LSRTIVPEEG (144 aa)) is editing domain. A catalytic region spans residues 207 to 506 (PHVRLMLEHE…QAQGKKPMFP (300 aa)). Cys299, His351, and His475 together coordinate Zn(2+).

It belongs to the class-II aminoacyl-tRNA synthetase family. Homodimer. The cofactor is Zn(2+).

Its subcellular location is the cytoplasm. The enzyme catalyses tRNA(Thr) + L-threonine + ATP = L-threonyl-tRNA(Thr) + AMP + diphosphate + H(+). Functionally, catalyzes the attachment of threonine to tRNA(Thr) in a two-step reaction: L-threonine is first activated by ATP to form Thr-AMP and then transferred to the acceptor end of tRNA(Thr). Also edits incorrectly charged L-seryl-tRNA(Thr). The sequence is that of Threonine--tRNA ligase from Thermococcus gammatolerans (strain DSM 15229 / JCM 11827 / EJ3).